A 498-amino-acid chain; its full sequence is Glycerol kinase (498 aa).

T12 contacts ADP. The ATP site is built by T12, T13, and S14. Sn-glycerol 3-phosphate is bound at residue T12. An ADP-binding site is contributed by R16. Sn-glycerol 3-phosphate contacts are provided by R82, E83, Y134, and D243. R82, E83, Y134, D243, and Q244 together coordinate glycerol. Positions 265 and 308 each coordinate ADP. T265, G308, Q312, and G411 together coordinate ATP. G411 serves as a coordination point for ADP.

It belongs to the FGGY kinase family.

It carries out the reaction glycerol + ATP = sn-glycerol 3-phosphate + ADP + H(+). It functions in the pathway polyol metabolism; glycerol degradation via glycerol kinase pathway; sn-glycerol 3-phosphate from glycerol: step 1/1. Its activity is regulated as follows. Inhibited by fructose 1,6-bisphosphate (FBP). Functionally, key enzyme in the regulation of glycerol uptake and metabolism. Catalyzes the phosphorylation of glycerol to yield sn-glycerol 3-phosphate. This chain is Glycerol kinase, found in Brucella canis (strain ATCC 23365 / NCTC 10854 / RM-666).